The primary structure comprises 872 residues: Probable GPI-anchored adhesin-like protein PGA25 (872 aa).

Residues 1-19 (MKVTAVSSVLLTVAALTNA) form the signal peptide. Residues 43–65 (PAAAPAAQPAAQPTTQSPADQPT) are compositionally biased toward low complexity. 3 disordered regions span residues 43-383 (PAAA…TIIP), 492-517 (KPTGSGSITVLPTKSTTTDDDDDETD), and 623-809 (PDDW…ECDT). A compositionally biased stretch (polar residues) spans 66–83 (VQSPVSSDQPSTAQPVAQ). 2 stretches are compositionally biased toward low complexity: residues 84–110 (NNLLLDSSNSTLVVPSSSKSSTTTRST) and 125–171 (SSEA…SSSS). Asn-92 is a glycosylation site (N-linked (GlcNAc...) asparagine). A compositionally biased stretch (acidic residues) spans 196 to 207 (ETDDEDCVEETE). Composition is skewed to low complexity over residues 208–225 (SPTSAPASAPTTSKVATT), 242–260 (SSAPISSAESSPTVASSTT), and 274–293 (SSVPSSSAETSTTVASNTTT). A glycan (N-linked (GlcNAc...) asparagine) is linked at Asn-290. Acidic residues predominate over residues 317–328 (AEEDDEECEDPT). The segment covering 349–363 (TSQSKTSVSSVVSKS) has biased composition (low complexity). Over residues 366–376 (EDDDDETECET) the composition is skewed to acidic residues. The segment covering 495 to 506 (GSGSITVLPTKS) has biased composition (polar residues). 2 stretches are compositionally biased toward acidic residues: residues 624-635 (DDWEDDGYEGED) and 646-659 (DDGEWEWYEEDDGE). 3 stretches are compositionally biased toward gly residues: residues 666–692 (SSSGSGTGSWWGSGAGSSGGTTSGSGS), 701–710 (SSGGTWGGSG), and 731–740 (SWWGGSGSGS). Residues 741–760 (SSGSSSGVSSGDSGSSSVTG) are compositionally biased toward low complexity. A compositionally biased stretch (gly residues) spans 761–771 (GSSGSWWGGSG). The span at 780–808 (DGYDDEDDQTPEPECDDEDDSWDDDEECD) shows a compositional bias: acidic residues. Residue Ala-845 is the site of GPI-anchor amidated alanine attachment. Positions 846–872 (QSVTQIENIGGKVSASGLFVVLGLLLI) are cleaved as a propeptide — removed in mature form.

It belongs to the HYR1/IFF family. In terms of processing, the GPI-anchor is attached to the protein in the endoplasmic reticulum and serves to target the protein to the cell surface. There, the glucosamine-inositol phospholipid moiety is cleaved off and the GPI-modified mannoprotein is covalently attached via its lipidless GPI glycan remnant to the 1,6-beta-glucan of the outer cell wall layer.

The protein resides in the secreted. The protein localises to the cell wall. Its subcellular location is the membrane. Probable GPI-anchored cell wall protein involved in cell wall organization, hyphal growth, as well as in host-fungal interaction and virulence. This chain is Probable GPI-anchored adhesin-like protein PGA25 (PGA25), found in Candida albicans (strain SC5314 / ATCC MYA-2876) (Yeast).